A 422-amino-acid polypeptide reads, in one-letter code: Histidine--tRNA ligase (422 aa).

It belongs to the class-II aminoacyl-tRNA synthetase family. As to quaternary structure, homodimer.

It is found in the cytoplasm. The enzyme catalyses tRNA(His) + L-histidine + ATP = L-histidyl-tRNA(His) + AMP + diphosphate + H(+). In Vibrio atlanticus (strain LGP32) (Vibrio splendidus (strain Mel32)), this protein is Histidine--tRNA ligase.